The sequence spans 278 residues: Elongation factor Ts (278 aa).

The segment at 79–82 is involved in Mg(2+) ion dislocation from EF-Tu; that stretch reads TDFV.

This sequence belongs to the EF-Ts family.

It is found in the cytoplasm. Functionally, associates with the EF-Tu.GDP complex and induces the exchange of GDP to GTP. It remains bound to the aminoacyl-tRNA.EF-Tu.GTP complex up to the GTP hydrolysis stage on the ribosome. The polypeptide is Elongation factor Ts (Borrelia duttonii (strain Ly)).